A 66-amino-acid polypeptide reads, in one-letter code: Large ribosomal subunit protein bL35 (66 aa).

Positions 1-16 are enriched in basic residues; it reads MPKQKTHRASAKRFKR. The segment at 1 to 21 is disordered; that stretch reads MPKQKTHRASAKRFKRTGSGG.

Belongs to the bacterial ribosomal protein bL35 family.

This is Large ribosomal subunit protein bL35 from Streptococcus sanguinis (strain SK36).